The sequence spans 247 residues: ATP synthase subunit a, chloroplastic (247 aa).

The next 5 helical transmembrane spans lie at 38-58, 95-115, 134-154, 199-219, and 220-240; these read QVLI…TIAV, VPFI…GALL, INTT…AGLT, LVVV…VMFL, and GLFT…AYIG.

Belongs to the ATPase A chain family. In terms of assembly, F-type ATPases have 2 components, CF(1) - the catalytic core - and CF(0) - the membrane proton channel. CF(1) has five subunits: alpha(3), beta(3), gamma(1), delta(1), epsilon(1). CF(0) has four main subunits: a, b, b' and c.

Its subcellular location is the plastid. The protein localises to the chloroplast thylakoid membrane. Functionally, key component of the proton channel; it plays a direct role in the translocation of protons across the membrane. The chain is ATP synthase subunit a, chloroplastic from Buxus microphylla (Littleleaf boxwood).